The following is a 396-amino-acid chain: Schizokinen exporter SchE (396 aa).

An N-terminal signal peptide occupies residues 1–25 (MLPKLILLATLYISQFIPTTFFIQA). Over 26–39 (LPVFMRQQKMSLDV) the chain is Cytoplasmic. The chain crosses the membrane as a helical span at residues 40–60 (IGFLGLLILPSGLKFLWSPFI). Residues 61–73 (DRYRLGKLGHYRG) are Periplasmic-facing. The chain crosses the membrane as a helical span at residues 74 to 94 (WIICFQLLLISTMLVTAFIDI). Residues 95–104 (QDNLNAFLTC) are Cytoplasmic-facing. A helical membrane pass occupies residues 105-127 (MFLASLFSSSQDIATDALAVNLL). At 128-137 (EPQERGLGNA) the chain is on the periplasmic side. The chain crosses the membrane as a helical span at residues 138 to 158 (IQSGGNIFGAIIGGGVMLILL). Residues 159 to 162 (DKIG) lie on the Cytoplasmic side of the membrane. The chain crosses the membrane as a helical span at residues 163–183 (WRYSLITLSIFMLINLVPILI). Topologically, residues 184 to 214 (YREKSQHQLENSTFFRSYFQPFISFLSRPKA) are periplasmic. The helical transmembrane segment at 215–235 (LPWLFVVLLYMMGDSVTSLMI) threads the bilayer. The Cytoplasmic segment spans residues 236–251 (RPLLVDRGLSLPDIGW). Residues 252–272 (ILGIVSYSARIVSALIAGLVI) form a helical membrane-spanning segment. Residues 273 to 281 (VKLGRIKSL) lie on the Periplasmic side of the membrane. The helical transmembrane segment at 282 to 302 (IIFGFIADLTTLLYIIPAIGV) threads the bilayer. Residues 303–304 (SS) lie on the Cytoplasmic side of the membrane. A helical membrane pass occupies residues 305-325 (LLVLYTVCIIVNATQSMAYTA). Residues 326-346 (LLSAMMDKCEKNTAATDYTMQ) are Periplasmic-facing. A run of 2 helical transmembrane segments spans residues 347–367 (VSVM…LATT) and 368–388 (MGYS…VFLI). Over 389–396 (TQEYGVSS) the chain is Periplasmic.

Belongs to the major facilitator superfamily.

It localises to the cell inner membrane. In terms of biological role, involved in the TolC-like protein HgdD-dependent secretion of schizokinen, a dihydroxamate-type siderophore. Transports schizokinen from the cytoplasm to the periplasm. The sequence is that of Schizokinen exporter SchE from Nostoc sp. (strain PCC 7120 / SAG 25.82 / UTEX 2576).